The chain runs to 380 residues: Serpin B7 (380 aa).

Phosphoserine is present on residues Ser-217 and Ser-223.

The protein belongs to the serpin family. Ov-serpin subfamily. In terms of tissue distribution, predominantly expressed in mesangial cells. Expressed in the epidermis of the whole body.

The protein resides in the cytoplasm. Might function as an inhibitor of Lys-specific proteases. Might influence the maturation of megakaryocytes via its action as a serpin. This is Serpin B7 (SERPINB7) from Homo sapiens (Human).